Here is a 157-residue protein sequence, read N- to C-terminus: Probable intracellular pathogenesis-related protein T1 (157 aa).

Residues Asn79 and Asn117 are each glycosylated (N-linked (GlcNAc...) asparagine).

The protein belongs to the BetVI family.

The chain is Probable intracellular pathogenesis-related protein T1 (PCKR3) from Catharanthus roseus (Madagascar periwinkle).